Here is a 183-residue protein sequence, read N- to C-terminus: Inner membrane-spanning protein YciB (183 aa).

5 consecutive transmembrane segments (helical) span residues 4-24 (FIEF…DIYM), 50-70 (MQLF…FFHD), 72-92 (TFIK…LLIS), 119-139 (VNLG…YVAF), and 149-169 (FKVF…GVYL).

The protein belongs to the YciB family.

The protein localises to the cell inner membrane. In terms of biological role, plays a role in cell envelope biogenesis, maintenance of cell envelope integrity and membrane homeostasis. The sequence is that of Inner membrane-spanning protein YciB from Aeromonas hydrophila subsp. hydrophila (strain ATCC 7966 / DSM 30187 / BCRC 13018 / CCUG 14551 / JCM 1027 / KCTC 2358 / NCIMB 9240 / NCTC 8049).